A 171-amino-acid chain; its full sequence is Large ribosomal subunit protein uL10 (171 aa).

It belongs to the universal ribosomal protein uL10 family. In terms of assembly, part of the ribosomal stalk of the 50S ribosomal subunit. The N-terminus interacts with L11 and the large rRNA to form the base of the stalk. The C-terminus forms an elongated spine to which L12 dimers bind in a sequential fashion forming a multimeric L10(L12)X complex.

Its function is as follows. Forms part of the ribosomal stalk, playing a central role in the interaction of the ribosome with GTP-bound translation factors. This is Large ribosomal subunit protein uL10 from Corynebacterium efficiens (strain DSM 44549 / YS-314 / AJ 12310 / JCM 11189 / NBRC 100395).